The following is a 78-amino-acid chain: Probable [Fe-S]-dependent transcriptional repressor (78 aa).

Positions 56, 61, 64, and 70 each coordinate iron-sulfur cluster.

This sequence belongs to the FeoC family.

Its function is as follows. May function as a transcriptional regulator that controls feoABC expression. The chain is Probable [Fe-S]-dependent transcriptional repressor from Escherichia fergusonii (strain ATCC 35469 / DSM 13698 / CCUG 18766 / IAM 14443 / JCM 21226 / LMG 7866 / NBRC 102419 / NCTC 12128 / CDC 0568-73).